The following is a 330-amino-acid chain: DNA-directed RNA polymerase subunit alpha (330 aa).

The segment at M1–E231 is alpha N-terminal domain (alpha-NTD). Positions M253–E330 are alpha C-terminal domain (alpha-CTD).

This sequence belongs to the RNA polymerase alpha chain family. In terms of assembly, homodimer. The RNAP catalytic core consists of 2 alpha, 1 beta, 1 beta' and 1 omega subunit. When a sigma factor is associated with the core the holoenzyme is formed, which can initiate transcription.

The catalysed reaction is RNA(n) + a ribonucleoside 5'-triphosphate = RNA(n+1) + diphosphate. Its function is as follows. DNA-dependent RNA polymerase catalyzes the transcription of DNA into RNA using the four ribonucleoside triphosphates as substrates. This Phocaeicola vulgatus (strain ATCC 8482 / DSM 1447 / JCM 5826 / CCUG 4940 / NBRC 14291 / NCTC 11154) (Bacteroides vulgatus) protein is DNA-directed RNA polymerase subunit alpha.